Consider the following 300-residue polypeptide: Formate dehydrogenase-O iron-sulfur subunit (300 aa).

Residues 1–260 are Cytoplasmic-facing; it reads MAYQSQDIIR…KFWKGIWKPL (260 aa). 4 4Fe-4S ferredoxin-type domains span residues 30 to 60, 91 to 123, 124 to 153, and 158 to 189; these read VAKL…DTVG, LEWL…QYAN, GIVD…LNPE, and YKCT…FGTK. Residues Cys-39, Cys-42, Cys-45, Cys-49, Cys-100, Cys-103, Cys-108, Cys-112, Cys-133, Cys-136, Cys-139, Cys-143, Cys-160, Cys-163, Cys-175, and Cys-179 each contribute to the [4Fe-4S] cluster site. The chain crosses the membrane as a helical span at residues 261–279; it reads AAVGFAATFAASIFHYVGV. The Periplasmic portion of the chain corresponds to 280 to 300; the sequence is GPNRADEEENNLHEEKDEERK.

As to quaternary structure, formate dehydrogenase is a membrane-bound complex, formed by subunits alpha, beta and gamma. Requires [4Fe-4S] cluster as cofactor.

The protein resides in the cell membrane. Its function is as follows. Allows to use formate as major electron donor during aerobic respiration. The beta chain is an electron transfer unit containing 4 cysteine clusters involved in the formation of iron-sulfur centers. Electrons are transferred from the gamma chain to the molybdenum cofactor of the alpha subunit. In Escherichia coli (strain K12), this protein is Formate dehydrogenase-O iron-sulfur subunit (fdoH).